The chain runs to 791 residues: Penicillin-binding protein 1A (791 aa).

The Cytoplasmic portion of the chain corresponds to 1–6 (MYKSLF). A helical; Signal-anchor for type II membrane protein membrane pass occupies residues 7 to 27 (FCLKILALLFLIGCGIVAYII). Residues 28–791 (YYYSRDLPDY…TEKDQSQEIY (764 aa)) lie on the Periplasmic side of the membrane. Positions 49–220 (TRIYSRDGKL…SELNPEKNYA (172 aa)) are transglycosylase. Glu-87 serves as the catalytic Proton donor; for transglycosylase activity. Residues 398 to 711 (DVIVVEPVKD…SSVVLPIFID (314 aa)) are transpeptidase. Ser-457 (acyl-ester intermediate; for transpeptidase activity) is an active-site residue.

This sequence in the N-terminal section; belongs to the glycosyltransferase 51 family. In the C-terminal section; belongs to the transpeptidase family.

It localises to the cell inner membrane. It carries out the reaction [GlcNAc-(1-&gt;4)-Mur2Ac(oyl-L-Ala-gamma-D-Glu-L-Lys-D-Ala-D-Ala)](n)-di-trans,octa-cis-undecaprenyl diphosphate + beta-D-GlcNAc-(1-&gt;4)-Mur2Ac(oyl-L-Ala-gamma-D-Glu-L-Lys-D-Ala-D-Ala)-di-trans,octa-cis-undecaprenyl diphosphate = [GlcNAc-(1-&gt;4)-Mur2Ac(oyl-L-Ala-gamma-D-Glu-L-Lys-D-Ala-D-Ala)](n+1)-di-trans,octa-cis-undecaprenyl diphosphate + di-trans,octa-cis-undecaprenyl diphosphate + H(+). The enzyme catalyses Preferential cleavage: (Ac)2-L-Lys-D-Ala-|-D-Ala. Also transpeptidation of peptidyl-alanyl moieties that are N-acyl substituents of D-alanine.. The protein operates within cell wall biogenesis; peptidoglycan biosynthesis. Cell wall formation. Synthesis of cross-linked peptidoglycan from the lipid intermediates. The enzyme has a penicillin-insensitive transglycosylase N-terminal domain (formation of linear glycan strands) and a penicillin-sensitive transpeptidase C-terminal domain (cross-linking of the peptide subunits). This is Penicillin-binding protein 1A (mrcA) from Rickettsia bellii (strain RML369-C).